The following is a 447-amino-acid chain: Adenylosuccinate synthetase (447 aa).

GTP is bound by residues 12 to 18 (GDEGKGK) and 40 to 42 (GHT). The active-site Proton acceptor is the aspartate 13. The Mg(2+) site is built by aspartate 13 and glycine 40. Residues 13 to 16 (DEGK), 38 to 41 (NAGH), threonine 128, arginine 142, glutamine 223, threonine 238, and arginine 302 each bind IMP. Residue histidine 41 is the Proton donor of the active site. 298 to 304 (TTTGRKR) contributes to the substrate binding site. Residues arginine 304, 330 to 332 (KLD), and 412 to 414 (SLG) each bind GTP.

This sequence belongs to the adenylosuccinate synthetase family. As to quaternary structure, homodimer. Mg(2+) is required as a cofactor.

The protein resides in the cytoplasm. It carries out the reaction IMP + L-aspartate + GTP = N(6)-(1,2-dicarboxyethyl)-AMP + GDP + phosphate + 2 H(+). It participates in purine metabolism; AMP biosynthesis via de novo pathway; AMP from IMP: step 1/2. Plays an important role in the de novo pathway of purine nucleotide biosynthesis. Catalyzes the first committed step in the biosynthesis of AMP from IMP. This chain is Adenylosuccinate synthetase, found in Nostoc sp. (strain PCC 7120 / SAG 25.82 / UTEX 2576).